A 575-amino-acid polypeptide reads, in one-letter code: Septation ring formation regulator EzrA (575 aa).

Residues 1 to 8 (MSNGQLIY) are Extracellular-facing. A helical transmembrane segment spans residues 9 to 27 (LMVAIAVILVLAYVVAIFL). At 28–575 (RKRNEGRLEA…YEKTRETIRF (548 aa)) the chain is on the cytoplasmic side. 4 coiled-coil regions span residues 105–191 (LKAS…FVTL), 265–301 (LYEA…LYDI), 354–416 (VRRI…IEKD), and 456–526 (TASN…IQEA).

Belongs to the EzrA family.

It is found in the cell membrane. Functionally, negative regulator of FtsZ ring formation; modulates the frequency and position of FtsZ ring formation. Inhibits FtsZ ring formation at polar sites. Interacts either with FtsZ or with one of its binding partners to promote depolymerization. The chain is Septation ring formation regulator EzrA from Streptococcus pneumoniae serotype 4 (strain ATCC BAA-334 / TIGR4).